We begin with the raw amino-acid sequence, 100 residues long: Small ribosomal subunit protein uS14c (100 aa).

This sequence belongs to the universal ribosomal protein uS14 family. Part of the 30S ribosomal subunit.

Its subcellular location is the plastid. It is found in the chloroplast. Functionally, binds 16S rRNA, required for the assembly of 30S particles. The sequence is that of Small ribosomal subunit protein uS14c from Eucalyptus globulus subsp. globulus (Tasmanian blue gum).